The following is an 81-amino-acid chain: Small ribosomal subunit protein bS16c (81 aa).

The protein belongs to the bacterial ribosomal protein bS16 family.

Its subcellular location is the plastid. It is found in the chloroplast. This is Small ribosomal subunit protein bS16c from Emiliania huxleyi (Coccolithophore).